We begin with the raw amino-acid sequence, 729 residues long: MLYKGDTLYLDWLEDGIAELVFDAPGSVNKLDTATVASLGQALEVLEKQHDLKGLLLRSNKAAFIVGADITEFLSLFLVPEEQLSQWLHFANSVFNRLEDLPVPTLAAVNGYALGGGCECVLATDYRLATPDLRIGLPETKLGIMPGFGGSVRLPRMLGADSALEIIAAGKDVGAEHALKIGLVDGVVKQEKLIEGAIAVLRQAITGDLDWRAKRQPKLEPLKLSKIEAAMSFTIAKGMVAQTAGKHYPAPMTAVKTIEAAARFGREEALNLENKSFVPLAHTNEARALVGIFLNDQYVKGKAKKLTKDIETPKQAAVLGAGIMGGGIAYQSAWKGVPVIMKDINDKSLNLGMTEAAKLLNKQLERGKIDGLKLAGVISTIHPTLDYAGFDRVDAVVEAVVENPKVKKAVLAETEQKVRPETVLASNTSTIPIGELASALERPENFCGMHFFNPVHRMPLVEIIRGEKSSDETIAKVVAWASKMGKTPIVVNDCPGFFVNRVLFPYFAGFSQLLRDGADFRKVDKVMEKQFGWPMGPAYLLDVVGIDTAHHAQAVMAAGFPQRMQKEYRDAIDALFDASRFGQKNGLGFWRYKEDSKGKPKKEEDAAVDDLLASVSQTKRDFSDDEIIARMMIPMINEVVRCLEEGIIASPAEADMALVYGLGFPPFHGGAFRWLDTQGSAKYLDMAQQYQHLGPLYEVPEGLRNKARHNEPYYPPVEPARPVGSLKTA.

An enoyl-CoA hydratase/isomerase region spans residues 1-189 (MLYKGDTLYL…KIGLVDGVVK (189 aa)). Position 296 (Asp-296) interacts with substrate. The 3-hydroxyacyl-CoA dehydrogenase stretch occupies residues 311–729 (ETPKQAAVLG…ARPVGSLKTA (419 aa)). NAD(+) is bound by residues Met-324, Asp-343, 400 to 402 (VVE), Lys-407, and Ser-429. His-450 (for 3-hydroxyacyl-CoA dehydrogenase activity) is an active-site residue. Asn-453 serves as a coordination point for NAD(+). Substrate contacts are provided by Asn-500 and Tyr-660. Residues 708–729 (RHNEPYYPPVEPARPVGSLKTA) form a disordered region.

In the N-terminal section; belongs to the enoyl-CoA hydratase/isomerase family. This sequence in the C-terminal section; belongs to the 3-hydroxyacyl-CoA dehydrogenase family. In terms of assembly, heterotetramer of two alpha chains (FadB) and two beta chains (FadA).

It carries out the reaction a (3S)-3-hydroxyacyl-CoA + NAD(+) = a 3-oxoacyl-CoA + NADH + H(+). It catalyses the reaction a (3S)-3-hydroxyacyl-CoA = a (2E)-enoyl-CoA + H2O. The enzyme catalyses a 4-saturated-(3S)-3-hydroxyacyl-CoA = a (3E)-enoyl-CoA + H2O. The catalysed reaction is (3S)-3-hydroxybutanoyl-CoA = (3R)-3-hydroxybutanoyl-CoA. It carries out the reaction a (3Z)-enoyl-CoA = a 4-saturated (2E)-enoyl-CoA. It catalyses the reaction a (3E)-enoyl-CoA = a 4-saturated (2E)-enoyl-CoA. It participates in lipid metabolism; fatty acid beta-oxidation. In terms of biological role, involved in the aerobic and anaerobic degradation of long-chain fatty acids via beta-oxidation cycle. Catalyzes the formation of 3-oxoacyl-CoA from enoyl-CoA via L-3-hydroxyacyl-CoA. It can also use D-3-hydroxyacyl-CoA and cis-3-enoyl-CoA as substrate. The protein is Fatty acid oxidation complex subunit alpha of Salmonella enteritidis PT4 (strain P125109).